The sequence spans 447 residues: Adenylosuccinate synthetase (447 aa).

Residues 12 to 18 (GDEGKGK) and 40 to 42 (GHT) contribute to the GTP site. Asp-13 serves as the catalytic Proton acceptor. Mg(2+)-binding residues include Asp-13 and Gly-40. IMP contacts are provided by residues 13-16 (DEGK), 38-41 (NAGH), Thr-128, Arg-142, Gln-223, Thr-238, and Arg-302. Residue His-41 is the Proton donor of the active site. 298-304 (TTTGRRR) contacts substrate. GTP-binding positions include Arg-304, 330 to 332 (KLD), and 412 to 414 (SLG).

This sequence belongs to the adenylosuccinate synthetase family. As to quaternary structure, homodimer. The cofactor is Mg(2+).

Its subcellular location is the cytoplasm. The enzyme catalyses IMP + L-aspartate + GTP = N(6)-(1,2-dicarboxyethyl)-AMP + GDP + phosphate + 2 H(+). It participates in purine metabolism; AMP biosynthesis via de novo pathway; AMP from IMP: step 1/2. In terms of biological role, plays an important role in the de novo pathway of purine nucleotide biosynthesis. Catalyzes the first committed step in the biosynthesis of AMP from IMP. This is Adenylosuccinate synthetase from Microcystis aeruginosa (strain NIES-843 / IAM M-2473).